A 299-amino-acid chain; its full sequence is Nucleotide-binding protein AFE_3021 (299 aa).

11 to 18 is a binding site for ATP; sequence GLSGSGKS. 62-65 lines the GTP pocket; it reads DVRN.

This sequence belongs to the RapZ-like family.

In terms of biological role, displays ATPase and GTPase activities. The protein is Nucleotide-binding protein AFE_3021 of Acidithiobacillus ferrooxidans (strain ATCC 23270 / DSM 14882 / CIP 104768 / NCIMB 8455) (Ferrobacillus ferrooxidans (strain ATCC 23270)).